We begin with the raw amino-acid sequence, 96 residues long: Protein transport protein Sec61 subunit beta (96 aa).

Residues M1–S17 show a composition bias toward polar residues. A disordered region spans residues M1–G54. P2 is subject to N-acetylproline. The Cytoplasmic segment spans residues P2 to V71. A Phosphoserine modification is found at S7. T9 is subject to Phosphothreonine. Residues S13, S14, and S17 each carry the phosphoserine modification. A lipid anchor (S-palmitoyl cysteine) is attached at C39. Positions G40 to A50 are enriched in low complexity. Residues P72 to G91 traverse the membrane as a helical segment. The Lumenal segment spans residues K92 to S96.

Belongs to the SEC61-beta family. In terms of assembly, the SEC61 channel-forming translocon complex consists of channel-forming core components SEC61A1, SEC61B and SEC61G and different auxiliary components such as SEC62 and SEC63. The SEC61 channel associates with the multi-pass translocon (MPT) complex. Interacts with TRAM1.

It is found in the endoplasmic reticulum membrane. Functionally, component of SEC61 channel-forming translocon complex that mediates transport of signal peptide-containing precursor polypeptides across the endoplasmic reticulum (ER). Forms a ribosome receptor and a gated pore in the ER membrane, both functions required for cotranslational translocation of nascent polypeptides. The SEC61 channel is also involved in ER membrane insertion of transmembrane proteins: it mediates membrane insertion of the first few transmembrane segments of proteins, while insertion of subsequent transmembrane regions of multi-pass membrane proteins is mediated by the multi-pass translocon (MPT) complex. The SEC61 channel cooperates with the translocating protein TRAM1 to import nascent proteins into the ER. The sequence is that of Protein transport protein Sec61 subunit beta (SEC61B) from Canis lupus familiaris (Dog).